We begin with the raw amino-acid sequence, 248 residues long: Ubiquinone biosynthesis O-methyltransferase (248 aa).

4 residues coordinate S-adenosyl-L-methionine: Arg-41, Gly-72, Asp-93, and Met-136.

Belongs to the methyltransferase superfamily. UbiG/COQ3 family.

The catalysed reaction is a 3-demethylubiquinol + S-adenosyl-L-methionine = a ubiquinol + S-adenosyl-L-homocysteine + H(+). It catalyses the reaction a 3-(all-trans-polyprenyl)benzene-1,2-diol + S-adenosyl-L-methionine = a 2-methoxy-6-(all-trans-polyprenyl)phenol + S-adenosyl-L-homocysteine + H(+). The protein operates within cofactor biosynthesis; ubiquinone biosynthesis. O-methyltransferase that catalyzes the 2 O-methylation steps in the ubiquinone biosynthetic pathway. This Sinorhizobium medicae (strain WSM419) (Ensifer medicae) protein is Ubiquinone biosynthesis O-methyltransferase.